A 155-amino-acid chain; its full sequence is Small ribosomal subunit protein uS7cz/uS7cy (155 aa).

As to quaternary structure, component of the chloroplast small ribosomal subunit (SSU). Mature 70S chloroplast ribosomes of higher plants consist of a small (30S) and a large (50S) subunit. The 30S small subunit contains 1 molecule of ribosomal RNA (16S rRNA) and 24 different proteins. The 50S large subunit contains 3 rRNA molecules (23S, 5S and 4.5S rRNA) and 33 different proteins.

Its subcellular location is the plastid. It is found in the chloroplast. In terms of biological role, component of the chloroplast ribosome (chloro-ribosome), a dedicated translation machinery responsible for the synthesis of chloroplast genome-encoded proteins, including proteins of the transcription and translation machinery and components of the photosynthetic apparatus. The chain is Small ribosomal subunit protein uS7cz/uS7cy (rps7-A) from Spinacia oleracea (Spinach).